Consider the following 219-residue polypeptide: uncharacterized protein (219 aa).

The next 2 membrane-spanning stretches (helical) occupy residues 8–28 (MILF…TLSV) and 194–214 (GIPG…GLLF).

The protein localises to the cell membrane. This is an uncharacterized protein from Archaeoglobus fulgidus (strain ATCC 49558 / DSM 4304 / JCM 9628 / NBRC 100126 / VC-16).